Consider the following 446-residue polypeptide: Trigger factor (446 aa).

In terms of domain architecture, PPIase FKBP-type spans 163 to 248 (GDIVTIDFKG…VRGIKRKKLA (86 aa)). The tract at residues 423-446 (SKPVPPREQGAAGETAETAEATPA) is disordered. The span at 432–446 (GAAGETAETAEATPA) shows a compositional bias: low complexity.

This sequence belongs to the FKBP-type PPIase family. Tig subfamily.

The protein localises to the cytoplasm. It carries out the reaction [protein]-peptidylproline (omega=180) = [protein]-peptidylproline (omega=0). Its function is as follows. Involved in protein export. Acts as a chaperone by maintaining the newly synthesized protein in an open conformation. Functions as a peptidyl-prolyl cis-trans isomerase. This Moorella thermoacetica (strain ATCC 39073 / JCM 9320) protein is Trigger factor.